Consider the following 150-residue polypeptide: MNVILLDKIANLGNLGDQVAVKAGYARNYLLPQGKAVVANESNVKVFEARRAELEAKLAADLAAANQRAEKIAALEAVVIASKAGDEGKLFGSVGTRDIADAVTAAGVELAKAEVRLPLGALRTTGDFEVEVQLHTEVKAVVKVSVVAEA.

The protein belongs to the bacterial ribosomal protein bL9 family.

In terms of biological role, binds to the 23S rRNA. The protein is Large ribosomal subunit protein bL9 of Shewanella sp. (strain MR-4).